We begin with the raw amino-acid sequence, 213 residues long: MTDQSHQCVIIGIAGASASGKSLIASTLYRELREQVGDEHIGVIPEDSYYKDQSHLSMEERVKTNYDHPNAMDHSLLFLHLQALKRGSAIELPVYSYVEHTRMQETVRVEPKKVIILEGILLLTDARLREEMNFSIFVDTPLDICLMRRIKRDVNERGRSMDSVMAQYQKTVRPMFLQFIEPSKQYADIIVPRGGKNRIAIDILKAKISQFFE.

15–22 (GASASGKS) serves as a coordination point for ATP.

The protein belongs to the uridine kinase family.

It is found in the cytoplasm. The catalysed reaction is uridine + ATP = UMP + ADP + H(+). It carries out the reaction cytidine + ATP = CMP + ADP + H(+). It participates in pyrimidine metabolism; CTP biosynthesis via salvage pathway; CTP from cytidine: step 1/3. Its pathway is pyrimidine metabolism; UMP biosynthesis via salvage pathway; UMP from uridine: step 1/1. The sequence is that of Uridine kinase from Salmonella newport (strain SL254).